Here is a 357-residue protein sequence, read N- to C-terminus: S-adenosylmethionine:tRNA ribosyltransferase-isomerase (357 aa).

This sequence belongs to the QueA family. As to quaternary structure, monomer.

Its subcellular location is the cytoplasm. The enzyme catalyses 7-aminomethyl-7-carbaguanosine(34) in tRNA + S-adenosyl-L-methionine = epoxyqueuosine(34) in tRNA + adenine + L-methionine + 2 H(+). It participates in tRNA modification; tRNA-queuosine biosynthesis. Its function is as follows. Transfers and isomerizes the ribose moiety from AdoMet to the 7-aminomethyl group of 7-deazaguanine (preQ1-tRNA) to give epoxyqueuosine (oQ-tRNA). In Edwardsiella ictaluri (strain 93-146), this protein is S-adenosylmethionine:tRNA ribosyltransferase-isomerase.